The sequence spans 135 residues: Retinol-binding protein 5 (135 aa).

This sequence belongs to the calycin superfamily. Fatty-acid binding protein (FABP) family.

Its subcellular location is the cytoplasm. Intracellular transport of retinol. In Pongo abelii (Sumatran orangutan), this protein is Retinol-binding protein 5 (RBP5).